Reading from the N-terminus, the 267-residue chain is Geranylgeranylglyceryl phosphate synthase (267 aa).

2 residues coordinate Mg(2+): Asp-23 and Ser-52. Sn-glycerol 1-phosphate contacts are provided by residues 173–179 (YLEAGSG), 205–206 (GG), and 227–228 (GT).

It belongs to the GGGP/HepGP synthase family. Group II subfamily. It depends on Mg(2+) as a cofactor.

It localises to the cytoplasm. The catalysed reaction is sn-glycerol 1-phosphate + (2E,6E,10E)-geranylgeranyl diphosphate = sn-3-O-(geranylgeranyl)glycerol 1-phosphate + diphosphate. Its pathway is membrane lipid metabolism; glycerophospholipid metabolism. Prenyltransferase that catalyzes the transfer of the geranylgeranyl moiety of geranylgeranyl diphosphate (GGPP) to the C3 hydroxyl of sn-glycerol-1-phosphate (G1P). This reaction is the first ether-bond-formation step in the biosynthesis of archaeal membrane lipids. This chain is Geranylgeranylglyceryl phosphate synthase, found in Caldivirga maquilingensis (strain ATCC 700844 / DSM 13496 / JCM 10307 / IC-167).